The following is a 549-amino-acid chain: MQADYIIIGSGSAGSALAHRLSEDSRNSVIVLEFGGTDIGPFIQMPAALAWPMSMNRYNWGYLSEPEPHLNNRRITAPRGKVIGGSSSINGMVYVRGHAEDFDRWEQLGAKGWAYADVLPYFKRMEHSHGGEDGWRGTDGPLHVQRGPVKNPLFHAFVEAGKQAGFEMTDDYNGSKQEGFGLMEQTTWRGRRWSAASAYLKPALKRPNVQLIRCFARKIVIENGRATGVEIERGGRIEVVKANREVIVSASSFNSPKLLMLSGIGPAAHLKDLGIDVKVDRPGVGQNLQDHMEFYFQQISTKPVSLYSWLPWFWQGVAGAQWLFFKSGLGISNQFEACAFLRSAPGVKQPDIQYHFLPVAIRYDGKAAANTHGFQVHVGYNLSKSRGSVTLRASDPKADPVIRFNYMSHPEDWEKFRHCVRLTREIFGQKAFDQYRGPEIQPGERVQTDEEIDAFLREHLESAYHPCGTCKMGSKDDPMAVVDPETRVIGVDGLRVADSSIFPHVTYGNLNAPSIMTGEKAADHILGKQPLARSNQEPWINPRWAISDR.

4–33 lines the FAD pocket; sequence DYIIIGSGSAGSALAHRLSEDSRNSVIVLE. His465 serves as the catalytic Proton acceptor.

The protein belongs to the GMC oxidoreductase family. FAD serves as cofactor.

It catalyses the reaction choline + A = betaine aldehyde + AH2. The catalysed reaction is betaine aldehyde + NAD(+) + H2O = glycine betaine + NADH + 2 H(+). Its pathway is amine and polyamine biosynthesis; betaine biosynthesis via choline pathway; betaine aldehyde from choline (cytochrome c reductase route): step 1/1. In terms of biological role, involved in the biosynthesis of the osmoprotectant glycine betaine. Catalyzes the oxidation of choline to betaine aldehyde and betaine aldehyde to glycine betaine at the same rate. In Sinorhizobium fredii (strain NBRC 101917 / NGR234), this protein is Oxygen-dependent choline dehydrogenase.